Here is a 173-residue protein sequence, read N- to C-terminus: MDITIQHPWFKRALGPLIPSRLFDQFFGEGLLEYDLLPLFSSTISPYYRQSLFRSVLESGISEVRSDRDKFTIMLDVKHFSPEDLSVKIIDDFVEIHGKHSERQDDHGYISREFHRRYRLPANVDQSAITCSLSSDGMLTFSGPKVPSNMDPSHSERPIPVSREEKPTSAPSS.

Met-1 bears the N-acetylmethionine mark. In terms of domain architecture, sHSP spans 52–162; the sequence is LFRSVLESGI…SHSERPIPVS (111 aa). Zn(2+)-binding residues include His-100, Glu-102, His-107, and His-154. Positions 142–173 are disordered; it reads SGPKVPSNMDPSHSERPIPVSREEKPTSAPSS. Residues 153 to 167 show a composition bias toward basic and acidic residues; that stretch reads SHSERPIPVSREEKP. A glycan (O-linked (GlcNAc) serine) is linked at Ser-162.

It belongs to the small heat shock protein (HSP20) family. Heteropolymer composed of three CRYAA and one CRYAB subunits. Inter-subunit bridging via zinc ions enhances stability, which is crucial as there is no protein turn over in the lens. Can also form homodimers and homotetramers (dimers of dimers) which serve as the building blocks of homooligomers. Within homooligomers, the zinc-binding motif is created from residues of 3 different molecules. His-100 and Glu-102 from one molecule are ligands of the zinc ion, and His-107 and His-154 residues from additional molecules complete the site with tetrahedral coordination geometry.

The protein resides in the cytoplasm. Its subcellular location is the nucleus. Its function is as follows. Contributes to the transparency and refractive index of the lens. May act as a chaperone, preventing aggregation of various proteins under a wide range of stress conditions. The polypeptide is Alpha-crystallin A chain (CRYAA) (Gallus gallus (Chicken)).